The chain runs to 278 residues: Large ribosomal subunit protein uL2 (278 aa).

Positions 214 to 278 (WLGKRPHNRG…IMRSRHQRKS (65 aa)) are disordered.

This sequence belongs to the universal ribosomal protein uL2 family. Part of the 50S ribosomal subunit. Forms a bridge to the 30S subunit in the 70S ribosome.

Its function is as follows. One of the primary rRNA binding proteins. Required for association of the 30S and 50S subunits to form the 70S ribosome, for tRNA binding and peptide bond formation. It has been suggested to have peptidyltransferase activity; this is somewhat controversial. Makes several contacts with the 16S rRNA in the 70S ribosome. The chain is Large ribosomal subunit protein uL2 from Chelativorans sp. (strain BNC1).